A 20-amino-acid chain; its full sequence is T cell receptor alpha joining 42 (20 aa).

The disordered stretch occupies residues 1–20; sequence YGGSQGNLIFGKGTKLSVKP.

In terms of assembly, alpha-beta TR is a heterodimer composed of an alpha and beta chain; disulfide-linked. The alpha-beta TR is associated with the transmembrane signaling CD3 coreceptor proteins to form the TR-CD3 (TcR or TCR). The assembly of alpha-beta TR heterodimers with CD3 occurs in the endoplasmic reticulum where a single alpha-beta TR heterodimer associates with one CD3D-CD3E heterodimer, one CD3G-CD3E heterodimer and one CD247 homodimer forming a stable octameric structure. CD3D-CD3E and CD3G-CD3E heterodimers preferentially associate with TR alpha and TR beta chains, respectively. The association of the CD247 homodimer is the last step of TcR assembly in the endoplasmic reticulum and is required for transport to the cell surface.

The protein resides in the cell membrane. Functionally, j region of the variable domain of T cell receptor (TR) alpha chain that participates in the antigen recognition. Alpha-beta T cell receptors are antigen specific receptors which are essential to the immune response and are present on the cell surface of T lymphocytes. Recognize peptide-major histocompatibility (MH) (pMH) complexes that are displayed by antigen presenting cells (APC), a prerequisite for efficient T cell adaptive immunity against pathogens. Binding of alpha-beta TR to pMH complex initiates TR-CD3 clustering on the cell surface and intracellular activation of LCK that phosphorylates the ITAM motifs of CD3G, CD3D, CD3E and CD247 enabling the recruitment of ZAP70. In turn, ZAP70 phosphorylates LAT, which recruits numerous signaling molecules to form the LAT signalosome. The LAT signalosome propagates signal branching to three major signaling pathways, the calcium, the mitogen-activated protein kinase (MAPK) kinase and the nuclear factor NF-kappa-B (NF-kB) pathways, leading to the mobilization of transcription factors that are critical for gene expression and essential for T cell growth and differentiation. The T cell repertoire is generated in the thymus, by V-(D)-J rearrangement. This repertoire is then shaped by intrathymic selection events to generate a peripheral T cell pool of self-MH restricted, non-autoaggressive T cells. Post-thymic interaction of alpha-beta TR with the pMH complexes shapes TR structural and functional avidity. The chain is T cell receptor alpha joining 42 from Homo sapiens (Human).